A 414-amino-acid chain; its full sequence is 2,3-diketo-5-methylthiopentyl-1-phosphate enolase (414 aa).

Residue lysine 99 is the Proton acceptor of the active site. Residues lysine 148, 174–177 (KDDE), histidine 265, glycine 338, and 360–361 (GG) each bind substrate. Positions 174, 176, and 177 each coordinate Mg(2+). Lysine 174 is subject to N6-carboxylysine.

It belongs to the RuBisCO large chain family. Type IV subfamily. Homodimer. Mg(2+) serves as cofactor.

It catalyses the reaction 5-methylsulfanyl-2,3-dioxopentyl phosphate = 2-hydroxy-5-methylsulfanyl-3-oxopent-1-enyl phosphate. The protein operates within amino-acid biosynthesis; L-methionine biosynthesis via salvage pathway; L-methionine from S-methyl-5-thio-alpha-D-ribose 1-phosphate: step 3/6. Catalyzes the enolization of 2,3-diketo-5-methylthiopentyl-1-phosphate (DK-MTP-1-P) into 2-hydroxy-3-keto-5-methylthiopentenyl-1-phosphate (HK-MTPenyl-1-P). The polypeptide is 2,3-diketo-5-methylthiopentyl-1-phosphate enolase (Bacillus thuringiensis (strain Al Hakam)).